A 198-amino-acid polypeptide reads, in one-letter code: Putative protein-methionine-sulfoxide reductase subunit YedZ1 (198 aa).

4 helical membrane passes run 12–32, 63–83, 124–144, and 167–187; these read WLRV…MSGW, FAAM…NIFS, AAYL…LVLW, and FIGM…VALV.

This sequence belongs to the HupC/HyaC/HydC family.

It localises to the cell inner membrane. In terms of biological role, part of the YedY1-YedZ1 system that may repair oxidized proteins containing methionine sulfoxide residues (Met-O). The sequence is that of Putative protein-methionine-sulfoxide reductase subunit YedZ1 from Azospira oryzae (strain ATCC BAA-33 / DSM 13638 / PS) (Dechlorosoma suillum).